The following is a 141-amino-acid chain: Nucleoside diphosphate kinase (141 aa).

6 residues coordinate ATP: Lys11, Phe59, Arg87, Thr93, Arg104, and Asn114. The Pros-phosphohistidine intermediate role is filled by His117.

Belongs to the NDK family. As to quaternary structure, homotetramer. Mg(2+) is required as a cofactor.

It localises to the cytoplasm. It catalyses the reaction a 2'-deoxyribonucleoside 5'-diphosphate + ATP = a 2'-deoxyribonucleoside 5'-triphosphate + ADP. It carries out the reaction a ribonucleoside 5'-diphosphate + ATP = a ribonucleoside 5'-triphosphate + ADP. Major role in the synthesis of nucleoside triphosphates other than ATP. The ATP gamma phosphate is transferred to the NDP beta phosphate via a ping-pong mechanism, using a phosphorylated active-site intermediate. In Alkalilimnicola ehrlichii (strain ATCC BAA-1101 / DSM 17681 / MLHE-1), this protein is Nucleoside diphosphate kinase.